The sequence spans 129 residues: Large ribosomal subunit protein bL19 (129 aa).

Belongs to the bacterial ribosomal protein bL19 family.

This protein is located at the 30S-50S ribosomal subunit interface and may play a role in the structure and function of the aminoacyl-tRNA binding site. The sequence is that of Large ribosomal subunit protein bL19 from Burkholderia mallei (strain NCTC 10247).